A 51-amino-acid polypeptide reads, in one-letter code: Large ribosomal subunit protein eL39 (51 aa).

This sequence belongs to the eukaryotic ribosomal protein eL39 family.

The sequence is that of Large ribosomal subunit protein eL39 from Thermococcus gammatolerans (strain DSM 15229 / JCM 11827 / EJ3).